Consider the following 306-residue polypeptide: Plant-type L-asparaginase (306 aa).

Threonine 176 (nucleophile) is an active-site residue. Residues 203–206 (RVGD) and 225–228 (TGLG) contribute to the substrate site.

This sequence belongs to the Ntn-hydrolase family. Heterotetramer of two alpha and two beta chains arranged as a dimer of alpha/beta heterodimers. In terms of processing, autocleaved. Generates the alpha and beta subunits. The N-terminal residue of the beta subunit is thought to be responsible for the nucleophile hydrolase activity.

It catalyses the reaction L-asparagine + H2O = L-aspartate + NH4(+). Catalyzes the hydrolysis of L-asparagine into L-aspartate and ammonia. This chain is Plant-type L-asparaginase, found in Pyrococcus furiosus (strain ATCC 43587 / DSM 3638 / JCM 8422 / Vc1).